The following is a 939-amino-acid chain: UvrABC system protein A (939 aa).

32–39 (GLSGSGKS) is an ATP binding site. Residues 252–279 (CADCGISIDELAPRMFSFNSPFGKCERC) form a C4-type zinc finger. 2 ABC transporter domains span residues 309–588 (WGDS…ENSL) and 608–936 (GNGN…KYLK). 640 to 647 (GVSGSGKS) provides a ligand contact to ATP. A C4-type zinc finger spans residues 739–765 (CEACSGDGIIKIEMQFLSDVYVPCEVC).

It belongs to the ABC transporter superfamily. UvrA family. As to quaternary structure, forms a heterotetramer with UvrB during the search for lesions.

It localises to the cytoplasm. Functionally, the UvrABC repair system catalyzes the recognition and processing of DNA lesions. UvrA is an ATPase and a DNA-binding protein. A damage recognition complex composed of 2 UvrA and 2 UvrB subunits scans DNA for abnormalities. When the presence of a lesion has been verified by UvrB, the UvrA molecules dissociate. In Clostridium perfringens (strain 13 / Type A), this protein is UvrABC system protein A.